A 289-amino-acid chain; its full sequence is tRNA-cytidine(32) 2-sulfurtransferase (289 aa).

The PP-loop motif signature appears at 39 to 44 (SGGKDS). Residues cysteine 114, cysteine 117, and cysteine 205 each contribute to the [4Fe-4S] cluster site.

This sequence belongs to the TtcA family. In terms of assembly, homodimer. Mg(2+) serves as cofactor. The cofactor is [4Fe-4S] cluster.

Its subcellular location is the cytoplasm. The enzyme catalyses cytidine(32) in tRNA + S-sulfanyl-L-cysteinyl-[cysteine desulfurase] + AH2 + ATP = 2-thiocytidine(32) in tRNA + L-cysteinyl-[cysteine desulfurase] + A + AMP + diphosphate + H(+). It participates in tRNA modification. In terms of biological role, catalyzes the ATP-dependent 2-thiolation of cytidine in position 32 of tRNA, to form 2-thiocytidine (s(2)C32). The sulfur atoms are provided by the cysteine/cysteine desulfurase (IscS) system. In Deinococcus geothermalis (strain DSM 11300 / CIP 105573 / AG-3a), this protein is tRNA-cytidine(32) 2-sulfurtransferase.